The sequence spans 156 residues: MPRRRVVGQRKILPDPKFNSELLAKFINVIMQDGKKSVAEKIIYKALDVVAEKKGEDHLVVLEAALDNVRPSVEVKSRRVGGSTYQVPCEVRPVRRNALAMRWLVEAARKRGEKSMALRLAGEMLDASDNKGTAVKKREDVHRMAEANKAFAHYRW.

This sequence belongs to the universal ribosomal protein uS7 family. In terms of assembly, part of the 30S ribosomal subunit. Contacts proteins S9 and S11.

In terms of biological role, one of the primary rRNA binding proteins, it binds directly to 16S rRNA where it nucleates assembly of the head domain of the 30S subunit. Is located at the subunit interface close to the decoding center, probably blocks exit of the E-site tRNA. The polypeptide is Small ribosomal subunit protein uS7 (Shewanella amazonensis (strain ATCC BAA-1098 / SB2B)).